A 283-amino-acid polypeptide reads, in one-letter code: RNase adapter protein RapZ (283 aa).

An ATP-binding site is contributed by G8 to S15. D56–N59 serves as a coordination point for GTP. Residues R266–K283 form an RNA-binding region.

Belongs to the RapZ-like family. RapZ subfamily. In terms of assembly, homotrimer.

Modulates the synthesis of GlmS, by affecting the processing and stability of the regulatory small RNA GlmZ. When glucosamine-6-phosphate (GlcN6P) concentrations are high in the cell, RapZ binds GlmZ and targets it to cleavage by RNase E. Consequently, GlmZ is inactivated and unable to activate GlmS synthesis. Under low GlcN6P concentrations, RapZ is sequestered and inactivated by an other regulatory small RNA, GlmY, preventing GlmZ degradation and leading to synthesis of GlmS. The chain is RNase adapter protein RapZ from Yersinia enterocolitica serotype O:8 / biotype 1B (strain NCTC 13174 / 8081).